The following is a 306-amino-acid chain: Plant-type L-asparaginase (306 aa).

The active-site Nucleophile is threonine 176. Substrate contacts are provided by residues 203-206 (RVGD) and 225-228 (TGLG).

Belongs to the Ntn-hydrolase family. In terms of assembly, heterotetramer of two alpha and two beta chains arranged as a dimer of alpha/beta heterodimers. The uncleaved protein forms homodimers. In terms of processing, autocleaved. Generates the alpha and beta subunits. The N-terminal residue of the beta subunit is thought to be responsible for the nucleophile hydrolase activity. Predominantly produced in the uncleaved form when gene expression is induced at 37 degrees Celsius with 0.5 mM IPTG. When produced at 42 degrees Celsius without adding IPTG, approximately 90% of the protein is found in the cleaved form, while the remaining 10% is observed as uncleaved precursor. Undergoes complete auto-cleavage within 24 hours at 37 degrees Celsius.

The catalysed reaction is L-asparagine + H2O = L-aspartate + NH4(+). With respect to regulation, undergoes auto-cleavage in a temperature-dependent and glycine-independent manner. Metal ions and EDTA do not have any significant effect on enzyme activity, indicating that activity is metal-independent. Catalyzes the hydrolysis of L-asparagine into L-aspartate and ammonia. Also displays D-asparaginase activity, which is about 10% of the L-asparaginase activity. Does not exhibit glutaminase activity. The chain is Plant-type L-asparaginase from Thermococcus kodakarensis (strain ATCC BAA-918 / JCM 12380 / KOD1) (Pyrococcus kodakaraensis (strain KOD1)).